The primary structure comprises 239 residues: Carboxy-S-adenosyl-L-methionine synthase (239 aa).

S-adenosyl-L-methionine-binding positions include tyrosine 35, 64–66 (GSS), 114–115 (DL), asparagine 129, and arginine 196.

This sequence belongs to the class I-like SAM-binding methyltransferase superfamily. Cx-SAM synthase family. As to quaternary structure, homodimer.

The catalysed reaction is prephenate + S-adenosyl-L-methionine = carboxy-S-adenosyl-L-methionine + 3-phenylpyruvate + H2O. Its function is as follows. Catalyzes the conversion of S-adenosyl-L-methionine (SAM) to carboxy-S-adenosyl-L-methionine (Cx-SAM). The polypeptide is Carboxy-S-adenosyl-L-methionine synthase (Helicobacter hepaticus (strain ATCC 51449 / 3B1)).